Here is a 225-residue protein sequence, read N- to C-terminus: NAD(P)H-quinone oxidoreductase subunit K, chloroplastic (225 aa).

4 residues coordinate [4Fe-4S] cluster: Cys-43, Cys-44, Cys-108, and Cys-139.

It belongs to the complex I 20 kDa subunit family. NDH is composed of at least 16 different subunits, 5 of which are encoded in the nucleus. It depends on [4Fe-4S] cluster as a cofactor.

It localises to the plastid. The protein resides in the chloroplast thylakoid membrane. The enzyme catalyses a plastoquinone + NADH + (n+1) H(+)(in) = a plastoquinol + NAD(+) + n H(+)(out). It catalyses the reaction a plastoquinone + NADPH + (n+1) H(+)(in) = a plastoquinol + NADP(+) + n H(+)(out). NDH shuttles electrons from NAD(P)H:plastoquinone, via FMN and iron-sulfur (Fe-S) centers, to quinones in the photosynthetic chain and possibly in a chloroplast respiratory chain. The immediate electron acceptor for the enzyme in this species is believed to be plastoquinone. Couples the redox reaction to proton translocation, and thus conserves the redox energy in a proton gradient. In Brachypodium distachyon (Purple false brome), this protein is NAD(P)H-quinone oxidoreductase subunit K, chloroplastic.